We begin with the raw amino-acid sequence, 1846 residues long: Brefeldin A-inhibited guanine nucleotide-exchange protein 1 (1846 aa).

The interval 2-224 is DCB; DCB:DCB domain and DCB:HUS domain interaction; it reads YEGKKTKNMF…QEAKQMERER (223 aa). Residue Ser-52 is modified to Phosphoserine. 3 disordered regions span residues 216 to 249, 264 to 304, and 347 to 410; these read EAKQ…LRYL, DLEP…ATAA, and ISAS…SPGA. Residues 264–277 are compositionally biased toward basic and acidic residues; that stretch reads DLEPQTHDVDKSLQ. Phosphoserine is present on residues Ser-286, Ser-289, and Ser-290. Composition is skewed to polar residues over residues 348–357 and 391–406; these read SASTEGNTGT and SVSS…SSGP. 2 positions are modified to phosphoserine: Ser-394 and Ser-407. The interval 554–574 is HUS; DCB:HUS domain interaction; sequence ADAQSVVDIYVNYDCDLNAAN. The interval 631–684 is disordered; it reads PNSQTTLGQEKPSEQEISEVKHPETINRYGSLNSLESTSSSGIGSYSTQMSGTD. The segment covering 641 to 655 has biased composition (basic and acidic residues); sequence KPSEQEISEVKHPET. Residues 661–681 are compositionally biased toward low complexity; it reads SLNSLESTSSSGIGSYSTQMS. The 190-residue stretch at 688 to 877 folds into the SEC7 domain; sequence QFEVLKQQKE…SAIYNEIAGK (190 aa). Residues 708-712 carry the Nuclear localization signal (NLS) motif; that stretch reads KKPKR. Ser-1076, Ser-1563, and Ser-1566 each carry phosphoserine.

As to quaternary structure, homodimer. Interacts with ARFGEF2/BIG2; both proteins are probably part of the same or very similar macromolecular complexes. Interacts with FKBP2. Interacts with MYO9B. Interacts with PRKAR1A and PRKAR2A. Interacts with PPP1CC. Interacts with NCL, FBL, NUP62 and U3 small nucleolar RNA. Interacts with DPY30. Interacts with PDE3A. Interacts with KANK1. Interacts with TBC1D22A and TBC1D22B. Phosphorylated. In vitro phosphorylated by PKA reducing its GEF activity and dephosphorylated by phosphatase PP1.

It localises to the cytoplasm. The protein localises to the perinuclear region. It is found in the golgi apparatus. The protein resides in the trans-Golgi network. Its subcellular location is the nucleus. It localises to the nucleolus. The protein localises to the nucleus matrix. It is found in the membrane. Inhibited by brefeldin A. Promotes guanine-nucleotide exchange on ARF1 and ARF3. Promotes the activation of ARF1/ARF3 through replacement of GDP with GTP. Involved in vesicular trafficking. Required for the maintenance of Golgi structure; the function may be independent of its GEF activity. Required for the maturation of integrin beta-1 in the Golgi. Involved in the establishment and persistence of cell polarity during directed cell movement in wound healing. Proposed to act as A kinase-anchoring protein (AKAP) and may mediate crosstalk between Arf and PKA pathways. Inhibits GAP activity of MYO9B probably through competitive RhoA binding. The function in the nucleus remains to be determined. The chain is Brefeldin A-inhibited guanine nucleotide-exchange protein 1 (Arfgef1) from Mus musculus (Mouse).